The chain runs to 345 residues: Trans-3-hydroxy-L-proline dehydratase (345 aa).

Ser-90 acts as the Proton acceptor in catalysis. Substrate-binding positions include 91 to 92, Asp-252, and 257 to 258; these read GS and GT.

The protein belongs to the proline racemase family.

It carries out the reaction trans-3-hydroxy-L-proline = 1-pyrroline-2-carboxylate + H2O. Functionally, catalyzes the dehydration of trans-3-hydroxy-L-proline (t3LHyp) to Delta(1)-pyrroline-2-carboxylate (Pyr2C). May be involved in a degradation pathway that converts t3LHyp to L-proline, which would allow S.novella to grow on t3LHyp as a sole carbon source. The polypeptide is Trans-3-hydroxy-L-proline dehydratase (Ancylobacter novellus (strain ATCC 8093 / DSM 506 / JCM 20403 / CCM 1077 / IAM 12100 / NBRC 12443 / NCIMB 10456) (Starkeya novella)).